Here is a 139-residue protein sequence, read N- to C-terminus: Probable disulfide formation protein C 1 (139 aa).

Residues 8-27 (EYALFTAWGASFIATLGSLY) form a helical membrane-spanning segment. Residues cysteine 37 and cysteine 40 are joined by a disulfide bond. A run of 2 helical transmembrane segments spans residues 42 to 61 (YQRIFMYPFVLWLGIAVVKK) and 68 to 85 (YSLPIASIGACISLYHYA). Cysteines 99 and 104 form a disulfide. Residues 113–135 (GFVTIPFLALIGFITIAVCSFIV) traverse the membrane as a helical segment.

It belongs to the DsbB family. BdbC subfamily.

It is found in the cell membrane. Functionally, required for disulfide bond formation in some proteins. The chain is Probable disulfide formation protein C 1 (bdbC1) from Bacillus cereus (strain ATCC 10987 / NRS 248).